The sequence spans 208 residues: ATP synthase subunit beta, chloroplastic (208 aa).

It belongs to the ATPase alpha/beta chains family. In terms of assembly, F-type ATPases have 2 components, CF(1) - the catalytic core - and CF(0) - the membrane proton channel. CF(1) has five subunits: alpha(3), beta(3), gamma(1), delta(1), epsilon(1). CF(0) has four main subunits: a(1), b(1), b'(1) and c(9-12).

Its subcellular location is the plastid. The protein localises to the chloroplast thylakoid membrane. The catalysed reaction is ATP + H2O + 4 H(+)(in) = ADP + phosphate + 5 H(+)(out). Its function is as follows. Produces ATP from ADP in the presence of a proton gradient across the membrane. The catalytic sites are hosted primarily by the beta subunits. The chain is ATP synthase subunit beta, chloroplastic (atpB) from Hypolepis hostilis (Fern).